A 447-amino-acid polypeptide reads, in one-letter code: Phosphoglucosamine mutase (447 aa).

The Phosphoserine intermediate role is filled by serine 101. Residues serine 101, aspartate 242, aspartate 244, and aspartate 246 each coordinate Mg(2+). Serine 101 is modified (phosphoserine).

The protein belongs to the phosphohexose mutase family. Mg(2+) serves as cofactor. In terms of processing, activated by phosphorylation.

The enzyme catalyses alpha-D-glucosamine 1-phosphate = D-glucosamine 6-phosphate. Functionally, catalyzes the conversion of glucosamine-6-phosphate to glucosamine-1-phosphate. The chain is Phosphoglucosamine mutase from Xanthobacter autotrophicus (strain ATCC BAA-1158 / Py2).